Consider the following 342-residue polypeptide: Probable dual-specificity RNA methyltransferase RlmN (342 aa).

Glu91 (proton acceptor) is an active-site residue. The Radical SAM core domain occupies 97–327 (YRYGNTVCLS…VTVRRELGDE (231 aa)). A disulfide bridge links Cys104 with Cys332. Residues Cys111, Cys115, and Cys118 each contribute to the [4Fe-4S] cluster site. S-adenosyl-L-methionine is bound by residues 158 to 159 (GE), Ser190, 213 to 215 (SLH), and Asn289. Cys332 acts as the S-methylcysteine intermediate in catalysis.

Belongs to the radical SAM superfamily. RlmN family. [4Fe-4S] cluster is required as a cofactor.

The protein localises to the cytoplasm. The catalysed reaction is adenosine(2503) in 23S rRNA + 2 reduced [2Fe-2S]-[ferredoxin] + 2 S-adenosyl-L-methionine = 2-methyladenosine(2503) in 23S rRNA + 5'-deoxyadenosine + L-methionine + 2 oxidized [2Fe-2S]-[ferredoxin] + S-adenosyl-L-homocysteine. It carries out the reaction adenosine(37) in tRNA + 2 reduced [2Fe-2S]-[ferredoxin] + 2 S-adenosyl-L-methionine = 2-methyladenosine(37) in tRNA + 5'-deoxyadenosine + L-methionine + 2 oxidized [2Fe-2S]-[ferredoxin] + S-adenosyl-L-homocysteine. Specifically methylates position 2 of adenine 2503 in 23S rRNA and position 2 of adenine 37 in tRNAs. The protein is Probable dual-specificity RNA methyltransferase RlmN of Carboxydothermus hydrogenoformans (strain ATCC BAA-161 / DSM 6008 / Z-2901).